The following is a 254-amino-acid chain: 5'/3'-nucleotidase SurE (254 aa).

Positions 9, 10, 40, and 93 each coordinate a divalent metal cation.

This sequence belongs to the SurE nucleotidase family. A divalent metal cation is required as a cofactor.

The protein localises to the cytoplasm. The enzyme catalyses a ribonucleoside 5'-phosphate + H2O = a ribonucleoside + phosphate. The catalysed reaction is a ribonucleoside 3'-phosphate + H2O = a ribonucleoside + phosphate. It catalyses the reaction [phosphate](n) + H2O = [phosphate](n-1) + phosphate + H(+). Its function is as follows. Nucleotidase with a broad substrate specificity as it can dephosphorylate various ribo- and deoxyribonucleoside 5'-monophosphates and ribonucleoside 3'-monophosphates with highest affinity to 3'-AMP. Also hydrolyzes polyphosphate (exopolyphosphatase activity) with the preference for short-chain-length substrates (P20-25). Might be involved in the regulation of dNTP and NTP pools, and in the turnover of 3'-mononucleotides produced by numerous intracellular RNases (T1, T2, and F) during the degradation of various RNAs. The chain is 5'/3'-nucleotidase SurE from Yersinia pseudotuberculosis serotype O:1b (strain IP 31758).